A 100-amino-acid chain; its full sequence is Enhancer of yellow 2 transcription factor (100 aa).

This sequence belongs to the ENY2 family. As to quaternary structure, component of the nuclear pore complex (NPC)-associated AMEX complex (anchoring and mRNA export complex), composed of at least e(y)2 and xmas-2. Component of the SAGA transcription coactivator-HAT complexes, at least composed of Ada2b, e(y)2, Pcaf/Gcn5, Taf10 and Nipped-A/Trrap. Within the SAGA complex, e(y)2, Sgf11, and not/nonstop form an additional subcomplex of SAGA called the DUB module (deubiquitination module). Component of the THO complex, composed of at least e(y)2, HPR1, THO2, THOC5, THOC6 and THOC7. Interacts with e(y)1. Interacts with su(Hw) (via zinc fingers). Interacts with xmas-2; required for localization to the nuclear periphery. Interacts with the nuclear pore complex (NPC).

The protein resides in the nucleus. It is found in the nucleoplasm. Its subcellular location is the cytoplasm. Its function is as follows. Involved in mRNA export coupled transcription activation by association with both the AMEX and the SAGA complexes. The SAGA complex is a multiprotein complex that activates transcription by remodeling chromatin and mediating histone acetylation and deubiquitination. Within the SAGA complex, participates in a subcomplex that specifically deubiquitinates histone H2B. The SAGA complex is recruited to specific gene promoters by activators, where it is required for transcription. Required for nuclear receptor-mediated transactivation. Involved in transcription elongation by recruiting the THO complex onto nascent mRNA. The AMEX complex functions in docking export-competent ribonucleoprotein particles (mRNPs) to the nuclear entrance of the nuclear pore complex (nuclear basket). AMEX participates in mRNA export and accurate chromatin positioning in the nucleus by tethering genes to the nuclear periphery. The sequence is that of Enhancer of yellow 2 transcription factor from Drosophila persimilis (Fruit fly).